The following is a 605-amino-acid chain: Kelch-like protein 26 (605 aa).

The region spanning 53-120 (LDVVLAIDNE…AYSSEVTLDL (68 aa)) is the BTB domain. The BACK domain maps to 155 to 256 (CLNIGQMATT…RSSELVDSVQ (102 aa)). 6 Kelch repeats span residues 300 to 351 (SLIT…VLDN), 352 to 403 (FVYV…VLDG), 404 to 450 (QLYA…TCGD), 452 to 498 (LYIS…SANN), 499 to 549 (RIYA…LLDK), and 551 to 598 (IYIV…PIIL).

Its function is as follows. May play a role in endo(sarco)plasmic reticulum (ER/SR) mitochondrial signaling. May be part of the ubiquitin-proteasome system (UPS) and affect ubiquitination and degradation of target substrates. This is Kelch-like protein 26 (klhl26) from Danio rerio (Zebrafish).